The chain runs to 735 residues: Peroxisomal multifunctional enzyme type 2 (735 aa).

Residues 1-305 (MASPLRFDGR…VEVLHKVDSE (305 aa)) form a (3R)-hydroxyacyl-CoA dehydrogenase region. NAD(+) is bound by residues 13-37 (LVTG…ALVI), Leu-21, and Asp-40. N6-acetyllysine; alternate is present on Lys-46. Lys-46 is modified (N6-succinyllysine; alternate). Ser-52 carries the post-translational modification Phosphoserine. An N6-succinyllysine mark is found at Lys-57 and Lys-68. 75–76 (SV) lines the NAD(+) pocket. Lys-84 is subject to N6-succinyllysine. Asn-99 lines the NAD(+) pocket. A substrate-binding site is contributed by Ser-151. Tyr-164 (proton acceptor) is an active-site residue. NAD(+) is bound by residues 164 to 168 (YSAAK) and 196 to 199 (AGSR). At Thr-265 the chain carries Phosphothreonine. Lys-275 carries the N6-succinyllysine modification. Phosphoserine occurs at positions 304 and 308. Residues 321–621 (SGFVGAVGHK…TQTPSEGGEL (301 aa)) form an enoyl-CoA hydratase 2 region. Lys-355 bears the N6-succinyllysine mark. Position 405 to 406 (405 to 406 (HG)) interacts with (3R)-3-hydroxydecanoyl-CoA. At Lys-423 the chain carries N6-succinyllysine. (3R)-3-hydroxydecanoyl-CoA-binding positions include Lys-434, 509–514 (DWNPLH), Gly-532, and Phe-562. The 117-residue stretch at 483–599 (VPNRPPDAVL…HETGDVVISN (117 aa)) folds into the MaoC-like domain. Lys-564 bears the N6-acetyllysine mark. N6-succinyllysine is present on residues Lys-578 and Lys-662. Positions 623–735 (SALVFGEIGR…QMILKDYAKL (113 aa)) constitute an SCP2 domain. Residue Lys-668 is modified to N6-acetyllysine. Gln-705 is a binding site for substrate. Lys-706 is subject to N6-acetyllysine. Residue Gln-723 coordinates substrate. At Lys-724 the chain carries N6-succinyllysine. Positions 733-735 (AKL) match the Microbody targeting signal motif.

The protein belongs to the short-chain dehydrogenases/reductases (SDR) family. As to quaternary structure, homodimer. Present in many tissues with highest concentrations in liver and kidney.

Its subcellular location is the peroxisome. The catalysed reaction is a (3R)-3-hydroxyacyl-CoA + NAD(+) = a 3-oxoacyl-CoA + NADH + H(+). It catalyses the reaction (24R,25R)-3alpha,7alpha,12alpha,24-tetrahydroxy-5beta-cholestan-26-oyl-CoA = (24E)-3alpha,7alpha,12alpha-trihydroxy-5beta-cholest-24-en-26-oyl-CoA + H2O. It carries out the reaction a (3R)-3-hydroxyacyl-CoA = a (2E)-enoyl-CoA + H2O. The enzyme catalyses (2E)-octenoyl-CoA + H2O = (3R)-hydroxyoctanoyl-CoA. The catalysed reaction is (3R)-hydroxyoctanoyl-CoA + NAD(+) = 3-oxooctanoyl-CoA + NADH + H(+). It catalyses the reaction (3R)-hydroxyhexadecanoyl-CoA + NAD(+) = 3-oxohexadecanoyl-CoA + NADH + H(+). It carries out the reaction (2E)-hexadecenedioyl-CoA + H2O = (3R)-hydroxyhexadecanedioyl-CoA. The enzyme catalyses (3R)-hydroxyhexadecanedioyl-CoA + NAD(+) = 3-oxohexadecanedioyl-CoA + NADH + H(+). The catalysed reaction is (3R)-hydroxyhexadecanoyl-CoA = (2E)-hexadecenoyl-CoA + H2O. It catalyses the reaction (3R)-3-hydroxydecanoyl-CoA = (2E)-decenoyl-CoA + H2O. It carries out the reaction (3R)-3-hydroxydecanoyl-CoA + NAD(+) = 3-oxodecanoyl-CoA + NADH + H(+). The enzyme catalyses (24R,25R)-3alpha,7alpha,12alpha,24-tetrahydroxy-5beta-cholestan-26-oyl-CoA + NAD(+) = 3alpha,7alpha,12alpha-trihydroxy-24-oxo-5beta-cholestan-26-oyl-CoA + NADH + H(+). It participates in lipid metabolism; fatty acid beta-oxidation. Functionally, bifunctional enzyme acting on the peroxisomal fatty acid beta-oxidation pathway. Catalyzes two of the four reactions in fatty acid degradation: hydration of 2-enoyl-CoA (trans-2-enoyl-CoA) to produce (3R)-3-hydroxyacyl-CoA, and dehydrogenation of (3R)-3-hydroxyacyl-CoA to produce 3-ketoacyl-CoA (3-oxoacyl-CoA), which is further metabolized by SCPx. Can use straight-chain and branched-chain fatty acids, as well as bile acid intermediates as substrates. This Mus musculus (Mouse) protein is Peroxisomal multifunctional enzyme type 2.